Here is a 742-residue protein sequence, read N- to C-terminus: Serine/threonine-protein kinase SKY1 (742 aa).

Positions 13-146 (KSAHLADTST…KDYRPGGYHP (134 aa)) are disordered. Over residues 19 to 35 (DTSTDASISCEEATSSQ) the composition is skewed to polar residues. Over residues 56–73 (TKSKLSLALQTSKSSSSA) the composition is skewed to low complexity. A compositionally biased stretch (basic and acidic residues) spans 81-101 (TSSKTEDFSTKSIKKKPDSGV). The segment covering 106 to 127 (SIQSDSGPQSDSDLDSDSSISS) has biased composition (low complexity). Positions 128–140 (CDERNEESLKDYR) are enriched in basic and acidic residues. Positions 158–706 (YILVRKLGWG…AGGLVNHPWL (549 aa)) constitute a Protein kinase domain. ATP is bound by residues 164–172 (LGWGHFSTV) and Lys187. Asp294 functions as the Proton acceptor in the catalytic mechanism. Residues Thr383 and Thr386 each carry the phosphothreonine modification. Ser388, Ser393, Ser410, Ser427, Ser432, Ser445, Ser449, and Ser453 each carry phosphoserine. A disordered region spans residues 459-491 (INEDSNDNNNNDNSKNKNNNNNNSNNNNNEDIM). The span at 465 to 489 (DNNNNDNSKNKNNNNNNSNNNNNED) shows a compositional bias: low complexity.

It belongs to the protein kinase superfamily. Ser/Thr protein kinase family.

It catalyses the reaction L-seryl-[protein] + ATP = O-phospho-L-seryl-[protein] + ADP + H(+). The enzyme catalyses L-threonyl-[protein] + ATP = O-phospho-L-threonyl-[protein] + ADP + H(+). Functionally, constitutively active kinase, specifically and sequentially phosphorylates serine/arginine (SR)-type shuttling mRNA binding proteins in their RS dipeptide repeats. The protein is Serine/threonine-protein kinase SKY1 (SKY1) of Saccharomyces cerevisiae (strain ATCC 204508 / S288c) (Baker's yeast).